Here is a 108-residue protein sequence, read N- to C-terminus: Small ribosomal subunit protein uS17 (108 aa).

The protein belongs to the universal ribosomal protein uS17 family. In terms of assembly, part of the 30S ribosomal subunit.

In terms of biological role, one of the primary rRNA binding proteins, it binds specifically to the 5'-end of 16S ribosomal RNA. In Methanocorpusculum labreanum (strain ATCC 43576 / DSM 4855 / Z), this protein is Small ribosomal subunit protein uS17.